The primary structure comprises 476 residues: ATP synthase subunit beta (476 aa).

162-169 (GGAGVGKT) serves as a coordination point for ATP.

This sequence belongs to the ATPase alpha/beta chains family. F-type ATPases have 2 components, CF(1) - the catalytic core - and CF(0) - the membrane proton channel. CF(1) has five subunits: alpha(3), beta(3), gamma(1), delta(1), epsilon(1). CF(0) has three main subunits: a(1), b(2) and c(9-12). The alpha and beta chains form an alternating ring which encloses part of the gamma chain. CF(1) is attached to CF(0) by a central stalk formed by the gamma and epsilon chains, while a peripheral stalk is formed by the delta and b chains.

It is found in the cell membrane. The catalysed reaction is ATP + H2O + 4 H(+)(in) = ADP + phosphate + 5 H(+)(out). Its function is as follows. Produces ATP from ADP in the presence of a proton gradient across the membrane. The catalytic sites are hosted primarily by the beta subunits. The polypeptide is ATP synthase subunit beta (Mycoplasma capricolum subsp. capricolum (strain California kid / ATCC 27343 / NCTC 10154)).